The primary structure comprises 346 residues: G-protein coupled receptor 42 (346 aa).

The Extracellular segment spans residues 1–19 (MDTGPDQSYFSGNHWFVFS). Residues 20–40 (VYLLTFLVGLPLNLLALVVFV) form a helical membrane-spanning segment. The Cytoplasmic portion of the chain corresponds to 41–47 (GKLRCRP). The helical transmembrane segment at 48–68 (VAVDVLLLNLTASDLLLLLFL) threads the bilayer. The Extracellular portion of the chain corresponds to 69 to 90 (PFRMVEAANGMHWPLPFILCPL). A helical membrane pass occupies residues 91–111 (SGFIFFTTIYLTALFLAAVSI). At 112–132 (ERFLSVAHPLWYKTRPRLGQA) the chain is on the cytoplasmic side. The helical transmembrane segment at 133-153 (GLVSVACWLLASAHCSVVYVI) threads the bilayer. Over 154 to 178 (EFSGDISHSQGTNGTCYLEFRKDQL) the chain is Extracellular. N-linked (GlcNAc...) asparagine glycosylation occurs at Asn166. Residues 179–199 (AILLPVRLEMAVVLFVVPLII) form a helical membrane-spanning segment. The Cytoplasmic segment spans residues 200-222 (TSYCYSRLVWILGRGGSHRRQRR). A helical membrane pass occupies residues 223–243 (VAGLVAATLLNFLVCFGPYNV). Residues 244–258 (SHVVGYICGESPVWR) lie on the Extracellular side of the membrane. The helical transmembrane segment at 259–279 (IYVTLLSTLNSCVDPFVYYFS) threads the bilayer. Topologically, residues 280-346 (SSGFQADFHE…TGGQVACAEN (67 aa)) are cytoplasmic. A compositionally biased stretch (basic and acidic residues) spans 307–330 (MELKEQKGGEEQRADRPAERKTSE). Residues 307–346 (MELKEQKGGEEQRADRPAERKTSEHSQGCGTGGQVACAEN) form a disordered region.

This sequence belongs to the G-protein coupled receptor 1 family.

It localises to the cell membrane. Its function is as follows. G protein-coupled receptor that is activated by short chain fatty acids (SCFAs), such as propionate. Hence may play a role in the regulation of whole-body energy homeostasis and/or in intestinal immunity. This chain is G-protein coupled receptor 42 (GPR42), found in Homo sapiens (Human).